An 800-amino-acid chain; its full sequence is DNA mismatch repair protein MutS (800 aa).

616–623 (GPNMGGKS) is a binding site for ATP.

Belongs to the DNA mismatch repair MutS family.

Its function is as follows. This protein is involved in the repair of mismatches in DNA. It is possible that it carries out the mismatch recognition step. This protein has a weak ATPase activity. This chain is DNA mismatch repair protein MutS, found in Buchnera aphidicola subsp. Baizongia pistaciae (strain Bp).